Reading from the N-terminus, the 378-residue chain is Dual-specificity RNA methyltransferase RlmN (378 aa).

Glutamate 96 acts as the Proton acceptor in catalysis. The 239-residue stretch at 102–340 (DNGRGTLCVS…ATVRTTRGDD (239 aa)) folds into the Radical SAM core domain. A disulfide bridge links cysteine 109 with cysteine 345. The [4Fe-4S] cluster site is built by cysteine 116, cysteine 120, and cysteine 123. S-adenosyl-L-methionine contacts are provided by residues 170–171 (GE), serine 202, 224–226 (SLH), and asparagine 302. The active-site S-methylcysteine intermediate is the cysteine 345.

The protein belongs to the radical SAM superfamily. RlmN family. It depends on [4Fe-4S] cluster as a cofactor.

Its subcellular location is the cytoplasm. It catalyses the reaction adenosine(2503) in 23S rRNA + 2 reduced [2Fe-2S]-[ferredoxin] + 2 S-adenosyl-L-methionine = 2-methyladenosine(2503) in 23S rRNA + 5'-deoxyadenosine + L-methionine + 2 oxidized [2Fe-2S]-[ferredoxin] + S-adenosyl-L-homocysteine. The enzyme catalyses adenosine(37) in tRNA + 2 reduced [2Fe-2S]-[ferredoxin] + 2 S-adenosyl-L-methionine = 2-methyladenosine(37) in tRNA + 5'-deoxyadenosine + L-methionine + 2 oxidized [2Fe-2S]-[ferredoxin] + S-adenosyl-L-homocysteine. Functionally, specifically methylates position 2 of adenine 2503 in 23S rRNA and position 2 of adenine 37 in tRNAs. m2A2503 modification seems to play a crucial role in the proofreading step occurring at the peptidyl transferase center and thus would serve to optimize ribosomal fidelity. The protein is Dual-specificity RNA methyltransferase RlmN of Hahella chejuensis (strain KCTC 2396).